Reading from the N-terminus, the 109-residue chain is Nucleoid-associated protein ETA_24730 (109 aa).

It belongs to the YbaB/EbfC family. In terms of assembly, homodimer.

The protein resides in the cytoplasm. The protein localises to the nucleoid. Functionally, binds to DNA and alters its conformation. May be involved in regulation of gene expression, nucleoid organization and DNA protection. The sequence is that of Nucleoid-associated protein ETA_24730 from Erwinia tasmaniensis (strain DSM 17950 / CFBP 7177 / CIP 109463 / NCPPB 4357 / Et1/99).